The primary structure comprises 226 residues: Histidine biosynthesis bifunctional protein HisIE (226 aa).

The segment at 1-131 (MMPMNQEFIQ…STFNRPLSNT (131 aa)) is phosphoribosyl-AMP cyclohydrolase. The tract at residues 132-226 (CSELFEVIKD…KRRQSKSNPK (95 aa)) is phosphoribosyl-ATP pyrophosphohydrolase.

This sequence in the N-terminal section; belongs to the PRA-CH family. In the C-terminal section; belongs to the PRA-PH family.

The protein resides in the cytoplasm. It carries out the reaction 1-(5-phospho-beta-D-ribosyl)-ATP + H2O = 1-(5-phospho-beta-D-ribosyl)-5'-AMP + diphosphate + H(+). It catalyses the reaction 1-(5-phospho-beta-D-ribosyl)-5'-AMP + H2O = 1-(5-phospho-beta-D-ribosyl)-5-[(5-phospho-beta-D-ribosylamino)methylideneamino]imidazole-4-carboxamide. It participates in amino-acid biosynthesis; L-histidine biosynthesis; L-histidine from 5-phospho-alpha-D-ribose 1-diphosphate: step 2/9. It functions in the pathway amino-acid biosynthesis; L-histidine biosynthesis; L-histidine from 5-phospho-alpha-D-ribose 1-diphosphate: step 3/9. This chain is Histidine biosynthesis bifunctional protein HisIE, found in Prochlorococcus marinus (strain SARG / CCMP1375 / SS120).